The chain runs to 332 residues: Probable cation efflux system protein MT2084 (332 aa).

5 helical membrane-spanning segments follow: residues 46 to 66 (ISLL…VMSG), 75 to 95 (IHNF…ALGA), 113 to 133 (AGSF…YEAI), 145 to 165 (VGWV…VALY), and 202 to 222 (VALG…AAIL).

Belongs to the cation diffusion facilitator (CDF) transporter (TC 2.A.4) family.

The protein localises to the cell membrane. The polypeptide is Probable cation efflux system protein MT2084 (Mycobacterium tuberculosis (strain CDC 1551 / Oshkosh)).